We begin with the raw amino-acid sequence, 550 residues long: Hydroxylamine reductase (550 aa).

[4Fe-4S] cluster is bound by residues cysteine 7, cysteine 10, cysteine 19, and cysteine 25. Hybrid [4Fe-2O-2S] cluster is bound by residues histidine 244, glutamate 268, cysteine 312, cysteine 405, cysteine 433, cysteine 458, glutamate 493, and lysine 495. Cysteine 405 bears the Cysteine persulfide mark.

This sequence belongs to the HCP family. It depends on [4Fe-4S] cluster as a cofactor. Requires hybrid [4Fe-2O-2S] cluster as cofactor.

Its subcellular location is the cytoplasm. The catalysed reaction is A + NH4(+) + H2O = hydroxylamine + AH2 + H(+). Functionally, catalyzes the reduction of hydroxylamine to form NH(3) and H(2)O. This Porphyromonas gingivalis (strain ATCC BAA-308 / W83) protein is Hydroxylamine reductase.